We begin with the raw amino-acid sequence, 623 residues long: Glutathione import ATP-binding protein GsiA (623 aa).

2 ABC transporter domains span residues Val-15–Leu-269 and Leu-325–Met-564. ATP contacts are provided by residues Gly-49 to Ser-56 and Gly-357 to Ser-364.

It belongs to the ABC transporter superfamily. Glutathione importer (TC 3.A.1.5.11) family. The complex is composed of two ATP-binding proteins (GsiA), two transmembrane proteins (GsiC and GsiD) and a solute-binding protein (GsiB).

The protein localises to the cell inner membrane. The enzyme catalyses glutathione(out) + ATP + H2O = glutathione(in) + ADP + phosphate + H(+). Its function is as follows. Part of the ABC transporter complex GsiABCD involved in glutathione import. Responsible for energy coupling to the transport system. This Salmonella choleraesuis (strain SC-B67) protein is Glutathione import ATP-binding protein GsiA.